The primary structure comprises 353 residues: Photosystem II D2 protein (353 aa).

Thr2 carries the post-translational modification N-acetylthreonine. Thr2 bears the Phosphothreonine mark. The chain crosses the membrane as a helical span at residues 41-61; it reads CAYFALGGWFTGTTFVTSWYT. Residue His118 participates in chlorophyll a binding. A helical transmembrane segment spans residues 125 to 141; the sequence is GFMLRQFEIARSVNLRP. Residues Gln130 and Asn143 each coordinate pheophytin a. Residues 153-166 traverse the membrane as a helical segment; sequence VFVSVFLIYPLGQS. His198 is a chlorophyll a binding site. A helical membrane pass occupies residues 208 to 228; it reads AALLCAIHGATVENTLFEDGD. A plastoquinone contacts are provided by His215 and Phe262. His215 is a binding site for Fe cation. His269 is a binding site for Fe cation. The helical transmembrane segment at 279–295 threads the bilayer; the sequence is GLWMSAIGVVGLALNLR.

Belongs to the reaction center PufL/M/PsbA/D family. As to quaternary structure, PSII is composed of 1 copy each of membrane proteins PsbA, PsbB, PsbC, PsbD, PsbE, PsbF, PsbH, PsbI, PsbJ, PsbK, PsbL, PsbM, PsbT, PsbX, PsbY, PsbZ, Psb30/Ycf12, at least 3 peripheral proteins of the oxygen-evolving complex and a large number of cofactors. It forms dimeric complexes. The D1/D2 heterodimer binds P680, chlorophylls that are the primary electron donor of PSII, and subsequent electron acceptors. It shares a non-heme iron and each subunit binds pheophytin, quinone, additional chlorophylls, carotenoids and lipids. There is also a Cl(-1) ion associated with D1 and D2, which is required for oxygen evolution. The PSII complex binds additional chlorophylls, carotenoids and specific lipids. is required as a cofactor.

It is found in the plastid. The protein localises to the chloroplast thylakoid membrane. The enzyme catalyses 2 a plastoquinone + 4 hnu + 2 H2O = 2 a plastoquinol + O2. Photosystem II (PSII) is a light-driven water:plastoquinone oxidoreductase that uses light energy to abstract electrons from H(2)O, generating O(2) and a proton gradient subsequently used for ATP formation. It consists of a core antenna complex that captures photons, and an electron transfer chain that converts photonic excitation into a charge separation. The D1/D2 (PsbA/PsbD) reaction center heterodimer binds P680, the primary electron donor of PSII as well as several subsequent electron acceptors. D2 is needed for assembly of a stable PSII complex. This is Photosystem II D2 protein from Tetradesmus obliquus (Green alga).